The following is a 277-amino-acid chain: Putative hydroxypyruvate isomerase (277 aa).

Active-site proton donor/acceptor residues include Glu150 and Glu249.

The protein belongs to the hyi family.

The enzyme catalyses 3-hydroxypyruvate = 2-hydroxy-3-oxopropanoate. In terms of biological role, catalyzes the reversible isomerization between hydroxypyruvate and 2-hydroxy-3-oxopropanoate (also termed tartronate semialdehyde). The chain is Putative hydroxypyruvate isomerase (HYI) from Homo sapiens (Human).